An 86-amino-acid chain; its full sequence is YcgL domain-containing protein XOO0428 (86 aa).

The 83-residue stretch at 1 to 83 (MHAYVYKSQR…PKTRVLAGEC (83 aa)) folds into the YcgL domain.

The protein is YcgL domain-containing protein XOO0428 of Xanthomonas oryzae pv. oryzae (strain MAFF 311018).